Reading from the N-terminus, the 607-residue chain is Guanine nucleotide-binding protein-like 1 (607 aa).

A compositionally biased stretch (basic residues) spans 1–14 (MPRKKPFSVKQKKK). Positions 1-81 (MPRKKPFSVK…GPRGYDPNRY (81 aa)) are disordered. The span at 15–26 (QLQDKRERKRGL) shows a compositional bias: basic and acidic residues. Residues S32, S33, and S34 each carry the phosphoserine modification. 2 positions are modified to phosphothreonine: T48 and T50. Residues S51 and S68 each carry the phosphoserine modification. The CP-type G domain maps to 178–418 (WRQLWRVLEM…LCDCPGLIFP (241 aa)). 225–228 (NKVD) provides a ligand contact to GTP. Residue S324 is modified to Phosphoserine. Residues 367-374 (GFPNVGKS) and 411-415 (DCPGL) each bind GTP. The segment at 547–607 (GPAGDEEEEE…PYALLGEDEC (61 aa)) is disordered. A compositionally biased stretch (acidic residues) spans 550 to 584 (GDEEEEEEEELSSSCEEEGEEDRDADEEGEGDEDT). Phosphoserine occurs at positions 561, 562, and 563.

The protein belongs to the TRAFAC class YlqF/YawG GTPase family.

Functionally, possible regulatory or functional link with the histocompatibility cluster. This Macaca fascicularis (Crab-eating macaque) protein is Guanine nucleotide-binding protein-like 1 (GNL1).